The chain runs to 519 residues: ATP synthase subunit beta (519 aa).

Residues 1–26 (MAKAATPKRAPARAAAIPAAATPAAK) are compositionally biased toward low complexity. The disordered stretch occupies residues 1–40 (MAKAATPKRAPARAAAIPAAATPAAKPAKRASTRSAAARS). Position 197 to 204 (197 to 204 (GGAGVGKT)) interacts with ATP.

The protein belongs to the ATPase alpha/beta chains family. In terms of assembly, F-type ATPases have 2 components, CF(1) - the catalytic core - and CF(0) - the membrane proton channel. CF(1) has five subunits: alpha(3), beta(3), gamma(1), delta(1), epsilon(1). CF(0) has three main subunits: a(1), b(2) and c(9-12). The alpha and beta chains form an alternating ring which encloses part of the gamma chain. CF(1) is attached to CF(0) by a central stalk formed by the gamma and epsilon chains, while a peripheral stalk is formed by the delta and b chains.

The protein localises to the cell inner membrane. The catalysed reaction is ATP + H2O + 4 H(+)(in) = ADP + phosphate + 5 H(+)(out). Produces ATP from ADP in the presence of a proton gradient across the membrane. The catalytic sites are hosted primarily by the beta subunits. In Chelativorans sp. (strain BNC1), this protein is ATP synthase subunit beta.